Consider the following 303-residue polypeptide: Ribonucleoside-diphosphate reductase small subunit (303 aa).

Aspartate 60, glutamate 90, and histidine 93 together coordinate Fe cation. The active site involves tyrosine 97. A helical transmembrane segment spans residues 147 to 167 (LLMILIEGIFFASSFASISYL). Fe cation-binding residues include glutamate 153, glutamate 187, and histidine 190.

It belongs to the ribonucleoside diphosphate reductase small chain family. As to quaternary structure, heterotetramer composed of a homodimer of the large subunit (R1) and a homodimer of the small subunit (R2). Larger multisubunit protein complex are also active, composed of (R1)n(R2)n. Fe cation serves as cofactor.

It localises to the host membrane. It catalyses the reaction a 2'-deoxyribonucleoside 5'-diphosphate + [thioredoxin]-disulfide + H2O = a ribonucleoside 5'-diphosphate + [thioredoxin]-dithiol. Functionally, ribonucleoside-diphosphate reductase holoenzyme provides the precursors necessary for viral DNA synthesis. Allows virus growth in non-dividing cells, as well as reactivation from latency in infected hosts. Catalyzes the biosynthesis of deoxyribonucleotides from the corresponding ribonucleotides. The chain is Ribonucleoside-diphosphate reductase small subunit from Suid herpesvirus 1 (strain Kaplan) (SuHV-1).